The following is a 582-amino-acid chain: Cryptochrome-2 (582 aa).

Positions 12-141 (CRSVHWFRRG…EVVIENSHTL (130 aa)) constitute a Photolyase/cryptochrome alpha/beta domain. FAD contacts are provided by residues Ser-261, Gln-298, His-364, and 396-398 (DAD). A disordered region spans residues 521–559 (GPVTDSAPGQGSSTSTAVRLPQSDQASPKRKHEGAEELC). Positions 527 to 546 (APGQGSSTSTAVRLPQSDQA) are enriched in polar residues.

It belongs to the DNA photolyase class-1 family. Component of the circadian core oscillator, which includes the CRY proteins, CLOCK or NPAS2, BMAL1 or BMAL2, CSNK1E, and the PER proteins. It depends on FAD as a cofactor. The cofactor is (6R)-5,10-methylene-5,6,7,8-tetrahydrofolate. As to expression, expressed in the pineal gland.

The protein localises to the cytoplasm. Its subcellular location is the nucleus. Transcriptional repressor which forms a core component of the circadian clock. The circadian clock, an internal time-keeping system, regulates various physiological processes through the generation of approximately 24 hour circadian rhythms in gene expression, which are translated into rhythms in metabolism and behavior. It is derived from the Latin roots 'circa' (about) and 'diem' (day) and acts as an important regulator of a wide array of physiological functions including metabolism, sleep, body temperature, blood pressure, endocrine, immune, cardiovascular, and renal function. Consists of two major components: the central clock, residing in the suprachiasmatic nucleus (SCN) of the brain, and the peripheral clocks that are present in nearly every tissue and organ system. Both the central and peripheral clocks can be reset by environmental cues, also known as Zeitgebers (German for 'timegivers'). The predominant Zeitgeber for the central clock is light, which is sensed by retina and signals directly to the SCN. The central clock entrains the peripheral clocks through neuronal and hormonal signals, body temperature and feeding-related cues, aligning all clocks with the external light/dark cycle. Circadian rhythms allow an organism to achieve temporal homeostasis with its environment at the molecular level by regulating gene expression to create a peak of protein expression once every 24 hours to control when a particular physiological process is most active with respect to the solar day. Transcription and translation of core clock components (CLOCK, NPAS2, BMAL1, BMAL2, PER1, PER2, PER3, CRY1 and CRY2) plays a critical role in rhythm generation, whereas delays imposed by post-translational modifications (PTMs) are important for determining the period (tau) of the rhythms (tau refers to the period of a rhythm and is the length, in time, of one complete cycle). A diurnal rhythm is synchronized with the day/night cycle, while the ultradian and infradian rhythms have a period shorter and longer than 24 hours, respectively. Disruptions in the circadian rhythms contribute to the pathology of cardiovascular diseases, cancer, metabolic syndromes and aging. A transcription/translation feedback loop (TTFL) forms the core of the molecular circadian clock mechanism. Transcription factors, CLOCK or NPAS2 and BMAL1 or BMAL2, form the positive limb of the feedback loop, act in the form of a heterodimer and activate the transcription of core clock genes and clock-controlled genes (involved in key metabolic processes), harboring E-box elements (5'-CACGTG-3') within their promoters. The core clock genes: PER1/2/3 and CRY1/2 which are transcriptional repressors form the negative limb of the feedback loop and interact with the CLOCK|NPAS2-BMAL1|BMAL2 heterodimer inhibiting its activity and thereby negatively regulating their own expression. This heterodimer also activates nuclear receptors NR1D1/2, RORA/B/G, which form a second feedback loop and which activate and repress BMAL1 transcription, respectively. CRY1 and CRY2 have redundant functions but also differential and selective contributions at least in defining the pace of the SCN circadian clock and its circadian transcriptional outputs. Less potent transcriptional repressor in cerebellum and liver than CRY1, though less effective in lengthening the period of the SCN oscillator. Seems to play a critical role in tuning SCN circadian period by opposing the action of CRY1. With CRY1, dispensable for circadian rhythm generation but necessary for the development of intercellular networks for rhythm synchrony. Represses CLOCK-BMAL1-mediated transcriptional activation. This chain is Cryptochrome-2 (CRY2), found in Gallus gallus (Chicken).